The chain runs to 203 residues: GTP cyclohydrolase-2 (203 aa).

49-53 is a binding site for GTP; it reads RIHSE. Positions 54, 65, and 67 each coordinate Zn(2+). GTP-binding positions include glutamine 70, 92–94, and threonine 114; that span reads EGR. The active-site Proton acceptor is aspartate 126. Arginine 128 functions as the Nucleophile in the catalytic mechanism. GTP contacts are provided by threonine 149 and lysine 154.

The protein belongs to the GTP cyclohydrolase II family. It depends on Zn(2+) as a cofactor.

It catalyses the reaction GTP + 4 H2O = 2,5-diamino-6-hydroxy-4-(5-phosphoribosylamino)-pyrimidine + formate + 2 phosphate + 3 H(+). The protein operates within cofactor biosynthesis; riboflavin biosynthesis; 5-amino-6-(D-ribitylamino)uracil from GTP: step 1/4. Catalyzes the conversion of GTP to 2,5-diamino-6-ribosylamino-4(3H)-pyrimidinone 5'-phosphate (DARP), formate and pyrophosphate. This Shewanella sp. (strain MR-7) protein is GTP cyclohydrolase-2.